Reading from the N-terminus, the 271-residue chain is Shikimate dehydrogenase (NADP(+)) (271 aa).

Shikimate is bound by residues 14–16 (SKS) and threonine 61. The active-site Proton acceptor is lysine 65. The shikimate site is built by asparagine 86 and aspartate 102. NADP(+) is bound by residues 126-130 (GAGGA), 149-154 (NRTFSR), and methionine 213. Position 215 (tyrosine 215) interacts with shikimate. Glycine 238 lines the NADP(+) pocket.

It belongs to the shikimate dehydrogenase family. As to quaternary structure, homodimer.

The enzyme catalyses shikimate + NADP(+) = 3-dehydroshikimate + NADPH + H(+). It functions in the pathway metabolic intermediate biosynthesis; chorismate biosynthesis; chorismate from D-erythrose 4-phosphate and phosphoenolpyruvate: step 4/7. Involved in the biosynthesis of the chorismate, which leads to the biosynthesis of aromatic amino acids. Catalyzes the reversible NADPH linked reduction of 3-dehydroshikimate (DHSA) to yield shikimate (SA). This chain is Shikimate dehydrogenase (NADP(+)), found in Histophilus somni (strain 2336) (Haemophilus somnus).